We begin with the raw amino-acid sequence, 746 residues long: NAD(P)H-quinone oxidoreductase subunit 5, chloroplastic (746 aa).

The next 16 helical transmembrane spans lie at W9 to F29, W40 to I60, I89 to I109, F125 to I145, V147 to T167, G185 to F205, V221 to S241, T258 to A278, L280 to I300, L327 to I347, A354 to S374, T396 to S416, L425 to Y445, I547 to P567, F608 to Y628, and F722 to Y742.

Belongs to the complex I subunit 5 family. NDH is composed of at least 16 different subunits, 5 of which are encoded in the nucleus.

It is found in the plastid. Its subcellular location is the chloroplast thylakoid membrane. The enzyme catalyses a plastoquinone + NADH + (n+1) H(+)(in) = a plastoquinol + NAD(+) + n H(+)(out). The catalysed reaction is a plastoquinone + NADPH + (n+1) H(+)(in) = a plastoquinol + NADP(+) + n H(+)(out). Functionally, NDH shuttles electrons from NAD(P)H:plastoquinone, via FMN and iron-sulfur (Fe-S) centers, to quinones in the photosynthetic chain and possibly in a chloroplast respiratory chain. The immediate electron acceptor for the enzyme in this species is believed to be plastoquinone. Couples the redox reaction to proton translocation, and thus conserves the redox energy in a proton gradient. The polypeptide is NAD(P)H-quinone oxidoreductase subunit 5, chloroplastic (ndhF) (Draba nemorosa (Woodland whitlowgrass)).